We begin with the raw amino-acid sequence, 681 residues long: Protein hook (681 aa).

The Calponin-homology (CH) domain maps to 6-123 (NEMYYSLLEW…RLLQLVLGCA (118 aa)). Coiled coils occupy residues 135–439 (EIMS…LKCG) and 482–584 (QTAL…KYRK).

The protein belongs to the hook family. In terms of assembly, homodimer. Interacts with microtubules via its N-terminus.

It is found in the cytoplasm. Its subcellular location is the cytoskeleton. The protein localises to the endosome. The protein resides in the synapse. Involved in endocytic trafficking by stabilizing organelles of the endocytic pathway. Probably acts as a cytoskeletal linker protein required to tether endosome vesicles to the cytoskeleton. Involved in modulation of endocytosis at stages required for down-regulation of membrane proteins that control synapse size. Not involved in synaptic vesicle recycling. Required in R7 cells for boss endocytosis into multivesicular bodies (MVBs). Has a role in regulating adult longevity. This Drosophila ananassae (Fruit fly) protein is Protein hook.